An 82-amino-acid polypeptide reads, in one-letter code: MSFNPELATKTLEAEGLRCPEPVMMVRKTIRNMQDGEVLLVKADDPSTTRDIPSFCRFMDHQLIAAQTDQLPYQYLIKKGLE.

The active-site Cysteine persulfide intermediate is cysteine 19.

The protein belongs to the sulfur carrier protein TusA family.

The protein localises to the cytoplasm. In terms of biological role, sulfur carrier protein which probably makes part of a sulfur-relay system. This Vibrio campbellii (strain ATCC BAA-1116) protein is Sulfur carrier protein TusA.